The sequence spans 351 residues: Protein Tex24 (351 aa).

3 disordered regions span residues 69 to 101 (PSTA…PSLS), 117 to 144 (PEDR…AQGK), and 275 to 298 (EKVK…PKSM). The segment covering 73–83 (HGKRKPGHLPR) has biased composition (basic residues). Positions 275–285 (EKVKPSSHDMH) are enriched in basic and acidic residues.

As to expression, specific to testis, where it is expressed in spermatogonia.

It is found in the nucleus. Its function is as follows. Nuclear factor which might have a role in spermatogenesis. The chain is Protein Tex24 from Mus musculus (Mouse).